A 225-amino-acid polypeptide reads, in one-letter code: Ribosomal RNA small subunit methyltransferase G (225 aa).

S-adenosyl-L-methionine is bound by residues G71, L76, 121 to 122 (AE), and R139. Residues 204–225 (VVEARRATPSNGRGRPGRSSRR) form a disordered region.

This sequence belongs to the methyltransferase superfamily. RNA methyltransferase RsmG family.

It is found in the cytoplasm. Specifically methylates the N7 position of guanine in position 518 of 16S rRNA. The sequence is that of Ribosomal RNA small subunit methyltransferase G from Mycobacterium sp. (strain JLS).